The chain runs to 343 residues: tRNA N6-adenosine threonylcarbamoyltransferase (343 aa).

His120 and His124 together coordinate Fe cation. Substrate-binding positions include 142–146 (VVSGG), Asp175, Gly188, Asp192, and Asn281. Position 310 (Asp310) interacts with Fe cation.

Belongs to the KAE1 / TsaD family. It depends on Fe(2+) as a cofactor.

It localises to the cytoplasm. The catalysed reaction is L-threonylcarbamoyladenylate + adenosine(37) in tRNA = N(6)-L-threonylcarbamoyladenosine(37) in tRNA + AMP + H(+). Functionally, required for the formation of a threonylcarbamoyl group on adenosine at position 37 (t(6)A37) in tRNAs that read codons beginning with adenine. Is involved in the transfer of the threonylcarbamoyl moiety of threonylcarbamoyl-AMP (TC-AMP) to the N6 group of A37, together with TsaE and TsaB. TsaD likely plays a direct catalytic role in this reaction. The protein is tRNA N6-adenosine threonylcarbamoyltransferase of Bacillus cereus (strain ATCC 10987 / NRS 248).